We begin with the raw amino-acid sequence, 290 residues long: Light-independent protochlorophyllide reductase iron-sulfur ATP-binding protein (290 aa).

ATP contacts are provided by residues 10–15 (GIGKST) and K39. S14 contacts Mg(2+). [4Fe-4S] cluster contacts are provided by C95 and C129. An ATP-binding site is contributed by 180–181 (NR).

Belongs to the NifH/BchL/ChlL family. As to quaternary structure, homodimer. Protochlorophyllide reductase is composed of three subunits; ChlL, ChlN and ChlB. The cofactor is [4Fe-4S] cluster.

It localises to the plastid. The protein localises to the chloroplast. The enzyme catalyses chlorophyllide a + oxidized 2[4Fe-4S]-[ferredoxin] + 2 ADP + 2 phosphate = protochlorophyllide a + reduced 2[4Fe-4S]-[ferredoxin] + 2 ATP + 2 H2O. Its pathway is porphyrin-containing compound metabolism; chlorophyll biosynthesis (light-independent). Component of the dark-operative protochlorophyllide reductase (DPOR) that uses Mg-ATP and reduced ferredoxin to reduce ring D of protochlorophyllide (Pchlide) to form chlorophyllide a (Chlide). This reaction is light-independent. The L component serves as a unique electron donor to the NB-component of the complex, and binds Mg-ATP. The sequence is that of Light-independent protochlorophyllide reductase iron-sulfur ATP-binding protein from Angiopteris evecta (Mule's foot fern).